A 328-amino-acid chain; its full sequence is Peroxidase 63 (328 aa).

The N-terminal stretch at 1–27 (MAEQSQLKNLTIILLLLCLSFQSLSFA) is a signal peptide. Disulfide bonds link C41–C122, C74–C79, C128–C324, and C207–C234. H72 functions as the Proton acceptor in the catalytic mechanism. 4 residues coordinate Ca(2+): D73, G78, D80, and S82. Substrate is bound at residue P170. H200 contacts heme b. T201 is a Ca(2+) binding site. N-linked (GlcNAc...) asparagine glycosylation is found at N217 and N218. 3 residues coordinate Ca(2+): D248, T251, and D256.

The protein belongs to the peroxidase family. Classical plant (class III) peroxidase subfamily. Heme b is required as a cofactor. Ca(2+) serves as cofactor.

The protein resides in the secreted. The catalysed reaction is 2 a phenolic donor + H2O2 = 2 a phenolic radical donor + 2 H2O. In terms of biological role, removal of H(2)O(2), oxidation of toxic reductants, biosynthesis and degradation of lignin, suberization, auxin catabolism, response to environmental stresses such as wounding, pathogen attack and oxidative stress. These functions might be dependent on each isozyme/isoform in each plant tissue. In Arabidopsis thaliana (Mouse-ear cress), this protein is Peroxidase 63 (PER63).